The sequence spans 627 residues: Chaperone protein DnaK (627 aa).

Phosphothreonine; by autocatalysis is present on Thr-197. Residues 596-615 (MYAQGGDQGQQAAPQQEQSG) are compositionally biased toward low complexity. A disordered region spans residues 596 to 627 (MYAQGGDQGQQAAPQQEQSGDNVEDVEFEEVK). Over residues 617-627 (NVEDVEFEEVK) the composition is skewed to acidic residues.

It belongs to the heat shock protein 70 family.

Acts as a chaperone. The polypeptide is Chaperone protein DnaK (Flavobacterium johnsoniae (strain ATCC 17061 / DSM 2064 / JCM 8514 / BCRC 14874 / CCUG 350202 / NBRC 14942 / NCIMB 11054 / UW101) (Cytophaga johnsonae)).